A 415-amino-acid chain; its full sequence is Imidazolonepropionase (415 aa).

Fe(3+) contacts are provided by His76 and His78. His76 and His78 together coordinate Zn(2+). 3 residues coordinate 4-imidazolone-5-propanoate: Arg85, Tyr148, and His181. Tyr148 lines the N-formimidoyl-L-glutamate pocket. His246 is a Fe(3+) binding site. Residue His246 participates in Zn(2+) binding. Residue Glu249 participates in 4-imidazolone-5-propanoate binding. Asp320 serves as a coordination point for Fe(3+). Asp320 is a binding site for Zn(2+). The N-formimidoyl-L-glutamate site is built by Asn322 and Gly324. Thr325 is a binding site for 4-imidazolone-5-propanoate.

The protein belongs to the metallo-dependent hydrolases superfamily. HutI family. It depends on Zn(2+) as a cofactor. Fe(3+) serves as cofactor.

It localises to the cytoplasm. It carries out the reaction 4-imidazolone-5-propanoate + H2O = N-formimidoyl-L-glutamate. It functions in the pathway amino-acid degradation; L-histidine degradation into L-glutamate; N-formimidoyl-L-glutamate from L-histidine: step 3/3. Functionally, catalyzes the hydrolytic cleavage of the carbon-nitrogen bond in imidazolone-5-propanoate to yield N-formimidoyl-L-glutamate. It is the third step in the universal histidine degradation pathway. The chain is Imidazolonepropionase from Caldanaerobacter subterraneus subsp. tengcongensis (strain DSM 15242 / JCM 11007 / NBRC 100824 / MB4) (Thermoanaerobacter tengcongensis).